The chain runs to 385 residues: uncharacterized protein (385 aa).

The protein belongs to the mimivirus L17x/L18x family.

This is an uncharacterized protein from Acanthamoeba polyphaga mimivirus (APMV).